We begin with the raw amino-acid sequence, 155 residues long: Gastrin-releasing peptide (155 aa).

The signal sequence occupies residues 1–31; the sequence is MEGVLLFWKYRALFFLVLCSLVLCKVHLSQA. The residue at position 60 (M60) is a Methionine amide. Positions 128-155 are excised as a propeptide; sequence FSGAEDNNLKEMLDYLYQMMNMKENTSS.

The protein belongs to the bombesin/neuromedin-B/ranatensin family. As to expression, brain and stomach. In the stomach GRP was localized, at the base of the gastric pits, to occasional cells whose distribution and appearance were consistent with that of gut neuroendocrine cells.

It is found in the secreted. Its subcellular location is the cytoplasmic vesicle. The protein localises to the secretory vesicle lumen. In terms of biological role, stimulates the release of gastrin and other gastrointestinal hormones. The sequence is that of Gastrin-releasing peptide (grp) from Bombina orientalis (Oriental fire-bellied toad).